The chain runs to 206 residues: Pyrrolidone-carboxylate peptidase 2 (206 aa).

Residues glutamate 78, cysteine 141, and histidine 165 contribute to the active site.

The protein belongs to the peptidase C15 family. Homotetramer.

The protein resides in the cytoplasm. It carries out the reaction Release of an N-terminal pyroglutamyl group from a polypeptide, the second amino acid generally not being Pro.. Functionally, removes 5-oxoproline from various penultimate amino acid residues except L-proline. In Caldanaerobacter subterraneus subsp. tengcongensis (strain DSM 15242 / JCM 11007 / NBRC 100824 / MB4) (Thermoanaerobacter tengcongensis), this protein is Pyrrolidone-carboxylate peptidase 2.